The chain runs to 432 residues: Adenosylhomocysteinase (432 aa).

Ser-2 carries the N-acetylserine modification. Substrate contacts are provided by Thr-57, Asp-131, and Glu-156. Position 183 is a phosphoserine (Ser-183). An NAD binding region spans residues 183-350; that stretch reads SVTKSKFDNL…EGRLVNLGCA (168 aa). Substrate contacts are provided by Lys-186 and Asp-190. Lys-186 carries the post-translational modification N6-(2-hydroxyisobutyryl)lysine. Tyr-193 is subject to Phosphotyrosine.

This sequence belongs to the adenosylhomocysteinase family. In terms of assembly, homotetramer. Interaction with AHCYL1. NAD(+) is required as a cofactor.

The protein localises to the cytoplasm. The protein resides in the melanosome. It is found in the nucleus. Its subcellular location is the endoplasmic reticulum. The enzyme catalyses S-adenosyl-L-homocysteine + H2O = L-homocysteine + adenosine. Its pathway is amino-acid biosynthesis; L-homocysteine biosynthesis; L-homocysteine from S-adenosyl-L-homocysteine: step 1/1. Catalyzes the hydrolysis of S-adenosyl-L-homocysteine to form adenosine and homocysteine. Binds copper ions. The sequence is that of Adenosylhomocysteinase (AHCY) from Sus scrofa (Pig).